The following is a 369-amino-acid chain: Glutamate 5-kinase (369 aa).

Residue lysine 10 coordinates ATP. 3 residues coordinate substrate: serine 50, aspartate 137, and asparagine 149. ATP contacts are provided by residues 169 to 170 (TD) and 210 to 216 (TGGMVTK). The PUA domain occupies 276–349 (EGSIFIDEGA…GKHSEEMLAT (74 aa)).

It belongs to the glutamate 5-kinase family.

Its subcellular location is the cytoplasm. The catalysed reaction is L-glutamate + ATP = L-glutamyl 5-phosphate + ADP. It participates in amino-acid biosynthesis; L-proline biosynthesis; L-glutamate 5-semialdehyde from L-glutamate: step 1/2. Catalyzes the transfer of a phosphate group to glutamate to form L-glutamate 5-phosphate. This is Glutamate 5-kinase from Desulfitobacterium hafniense (strain Y51).